We begin with the raw amino-acid sequence, 337 residues long: Phosphate acyltransferase (337 aa).

Belongs to the PlsX family. As to quaternary structure, homodimer. Probably interacts with PlsY.

The protein resides in the cytoplasm. The enzyme catalyses a fatty acyl-[ACP] + phosphate = an acyl phosphate + holo-[ACP]. Its pathway is lipid metabolism; phospholipid metabolism. Its function is as follows. Catalyzes the reversible formation of acyl-phosphate (acyl-PO(4)) from acyl-[acyl-carrier-protein] (acyl-ACP). This enzyme utilizes acyl-ACP as fatty acyl donor, but not acyl-CoA. The chain is Phosphate acyltransferase from Polynucleobacter necessarius subsp. necessarius (strain STIR1).